Consider the following 323-residue polypeptide: Acetyl esterase (323 aa).

Positions 91–93 match the Involved in the stabilization of the negatively charged intermediate by the formation of the oxyanion hole motif; it reads HGG. Catalysis depends on residues serine 165, aspartate 262, and histidine 292.

It belongs to the 'GDXG' lipolytic enzyme family. As to quaternary structure, homodimer. Interacts with MalT and MelA.

The protein localises to the cytoplasm. Functionally, displays esterase activity towards short chain fatty esters (acyl chain length of up to 8 carbons). Able to hydrolyze triacetylglycerol (triacetin) and tributyrylglycerol (tributyrin), but not trioleylglycerol (triolein) or cholesterol oleate. Negatively regulates MalT activity by antagonizing maltotriose binding. Inhibits MelA galactosidase activity. The protein is Acetyl esterase of Salmonella agona (strain SL483).